A 208-amino-acid polypeptide reads, in one-letter code: Uracil phosphoribosyltransferase (208 aa).

Residues Arg78, Arg103, and 130-138 contribute to the 5-phospho-alpha-D-ribose 1-diphosphate site; that span reads DPMLATGGS. Uracil is bound by residues Ile193 and 198–200; that span reads GDA. Asp199 contributes to the 5-phospho-alpha-D-ribose 1-diphosphate binding site.

This sequence belongs to the UPRTase family. Mg(2+) serves as cofactor.

It catalyses the reaction UMP + diphosphate = 5-phospho-alpha-D-ribose 1-diphosphate + uracil. It participates in pyrimidine metabolism; UMP biosynthesis via salvage pathway; UMP from uracil: step 1/1. Its activity is regulated as follows. Allosterically activated by GTP. Catalyzes the conversion of uracil and 5-phospho-alpha-D-ribose 1-diphosphate (PRPP) to UMP and diphosphate. This Acholeplasma laidlawii (strain PG-8A) protein is Uracil phosphoribosyltransferase.